Here is a 136-residue protein sequence, read N- to C-terminus: Transmembrane protein 203 (136 aa).

Helical transmembrane passes span 14–34 (FAQL…VLLA), 50–72 (FIPF…VRLF), 81–101 (VLRL…EMLL), and 112–132 (LWFG…MIRA).

The protein resides in the endoplasmic reticulum membrane. Its subcellular location is the endoplasmic reticulum-Golgi intermediate compartment. Its function is as follows. Involved in the regulation of cellular calcium homeotasis. May act as a regulator of STING-mediated inflammatory signaling in macrophages. This Xenopus tropicalis (Western clawed frog) protein is Transmembrane protein 203 (tmem203).